The following is a 662-amino-acid chain: Eukaryotic peptide chain release factor GTP-binding subunit (662 aa).

Residues methionine 1–aspartate 220 are disordered. A compositionally biased stretch (low complexity) spans alanine 26 to proline 40. The span at tyrosine 62–threonine 89 shows a compositional bias: polar residues. Residues aspartate 91–lysine 102 are compositionally biased toward basic and acidic residues. The span at glycine 122–isoleucine 134 shows a compositional bias: polar residues. Low complexity predominate over residues threonine 141–threonine 158. Position 182 is a phosphothreonine (threonine 182). Positions alanine 192–threonine 213 are enriched in low complexity. The 229-residue stretch at lysine 236–lysine 464 folds into the tr-type G domain. The interval glycine 245–serine 252 is G1. Glycine 245–serine 252 contributes to the GTP binding site. The segment at glycine 301–glutamate 305 is G2. The interval aspartate 322 to glycine 325 is G3. GTP-binding positions include asparagine 384–aspartate 387 and alanine 428–tyrosine 429. A G4 region spans residues asparagine 384–aspartate 387. The segment at serine 427 to tyrosine 429 is G5. Serine 539 carries the phosphoserine modification.

The protein belongs to the TRAFAC class translation factor GTPase superfamily. Classic translation factor GTPase family. ERF3 subfamily. In terms of assembly, component of the eRF1-eRF3-GTP ternary complex, composed of sup45/eRF1, sup35/eRF3 and GTP.

Its subcellular location is the cytoplasm. It carries out the reaction GTP + H2O = GDP + phosphate + H(+). In terms of biological role, GTPase component of the eRF1-eRF3-GTP ternary complex, a ternary complex that mediates translation termination in response to the termination codons. Sup35/eRF3 mediates sup45/ERF1 delivery to stop codons: The eRF1-eRF3-GTP complex binds to a stop codon in the ribosomal A-site. GTP hydrolysis by sup35/eRF3 induces a conformational change that leads to its dissociation, permitting sup45/eRF1 to accommodate fully in the A-site. This is Eukaryotic peptide chain release factor GTP-binding subunit (sup35) from Schizosaccharomyces pombe (strain 972 / ATCC 24843) (Fission yeast).